The sequence spans 86 residues: MAEDMETKLKNYKTAPFDSRFPNQNQTRNCWQNYLDFHRCQKAMTAKGGDISVCEWYQRVYQSLCPTSWVTDWDEQRAEGTFPGKI.

Residue A2 is modified to N-acetylalanine. The CHCH domain occupies 27 to 73 (TRNCWQNYLDFHRCQKAMTAKGGDISVCEWYQRVYQSLCPTSWVTDW). The Cx9C motif signature appears at 30–40 (CWQNYLDFHRC). 2 disulfide bridges follow: C30–C65 and C40–C54. The Cx10C motif signature appears at 54–65 (CEWYQRVYQSLC).

Belongs to the cytochrome c oxidase subunit 6B family. As to quaternary structure, component of the cytochrome c oxidase (complex IV, CIV), a multisubunit enzyme composed of 14 subunits. The complex is composed of a catalytic core of 3 subunits MT-CO1, MT-CO2 and MT-CO3, encoded in the mitochondrial DNA, and 11 supernumerary subunits COX4I, COX5A, COX5B, COX6A, COX6B, COX6C, COX7A, COX7B, COX7C, COX8 and NDUFA4, which are encoded in the nuclear genome. The complex exists as a monomer or a dimer and forms supercomplexes (SCs) in the inner mitochondrial membrane with NADH-ubiquinone oxidoreductase (complex I, CI) and ubiquinol-cytochrome c oxidoreductase (cytochrome b-c1 complex, complex III, CIII), resulting in different assemblies (supercomplex SCI(1)III(2)IV(1) and megacomplex MCI(2)III(2)IV(2)).

Its subcellular location is the mitochondrion inner membrane. It functions in the pathway energy metabolism; oxidative phosphorylation. Functionally, component of the cytochrome c oxidase, the last enzyme in the mitochondrial electron transport chain which drives oxidative phosphorylation. The respiratory chain contains 3 multisubunit complexes succinate dehydrogenase (complex II, CII), ubiquinol-cytochrome c oxidoreductase (cytochrome b-c1 complex, complex III, CIII) and cytochrome c oxidase (complex IV, CIV), that cooperate to transfer electrons derived from NADH and succinate to molecular oxygen, creating an electrochemical gradient over the inner membrane that drives transmembrane transport and the ATP synthase. Cytochrome c oxidase is the component of the respiratory chain that catalyzes the reduction of oxygen to water. Electrons originating from reduced cytochrome c in the intermembrane space (IMS) are transferred via the dinuclear copper A center (CU(A)) of subunit 2 and heme A of subunit 1 to the active site in subunit 1, a binuclear center (BNC) formed by heme A3 and copper B (CU(B)). The BNC reduces molecular oxygen to 2 water molecules using 4 electrons from cytochrome c in the IMS and 4 protons from the mitochondrial matrix. The chain is Cytochrome c oxidase subunit 6B1 (COX6B1) from Pongo abelii (Sumatran orangutan).